A 171-amino-acid polypeptide reads, in one-letter code: Putative F-box protein At1g32020 (171 aa).

In terms of domain architecture, F-box spans 3 to 49; it reads CDRISTLPDHLVAKIVSYLGIKDSIKTSVLSKRWEFVWLKVVGLDLK.

The chain is Putative F-box protein At1g32020 from Arabidopsis thaliana (Mouse-ear cress).